The following is a 428-amino-acid chain: Stromal membrane-associated protein 2 (428 aa).

An Arf-GAP domain is found at 13–139; sequence QAVLGSLLSE…INTFRKEKDD (127 aa). A C4-type zinc finger spans residues 28–51; that stretch reads CADCQAKGPRWASWNIGVFICIRC. Basic and acidic residues predominate over residues 161–172; sequence VKMPQKKEETQQ. 2 disordered regions span residues 161-182 and 222-258; these read VKMPQKKEETQQSRKSSPKSTE and SRKVSGSMPTSGSAGSVPENLNLFPEPGGKGEEAGKK.

In terms of assembly, may interact with clathrin heavy chains.

GTPase activating protein. May play a role in clathrin-dependent retrograde transport from early endosomes to the trans-Golgi network. This is Stromal membrane-associated protein 2 (SMAP2) from Gallus gallus (Chicken).